The sequence spans 207 residues: Large ribosomal subunit protein bL25 (207 aa).

The protein belongs to the bacterial ribosomal protein bL25 family. CTC subfamily. As to quaternary structure, part of the 50S ribosomal subunit; part of the 5S rRNA/L5/L18/L25 subcomplex. Contacts the 5S rRNA. Binds to the 5S rRNA independently of L5 and L18.

Functionally, this is one of the proteins that binds to the 5S RNA in the ribosome where it forms part of the central protuberance. The protein is Large ribosomal subunit protein bL25 of Brucella abortus (strain S19).